Reading from the N-terminus, the 63-residue chain is Conotoxin p5a (63 aa).

Positions 1 to 19 are cleaved as a signal peptide; the sequence is MRCLPVFVILLLLIPSAPC. A propeptide spanning residues 20 to 50 is cleaved from the precursor; sequence VDAHPKTKDDMPLASFHDNAKGTLQRFWKKR. Disulfide bonds link Cys-52-Cys-59 and Cys-53-Cys-60. Leu-62 carries the post-translational modification Leucine amide.

Expressed by the venom duct.

Its subcellular location is the secreted. Functionally, in vivo, low levels of the peptide injected into male specimens of the Siamese fighting fish causes an immediate aggressive display in this fish in response to their reflection when placed in a mirrored aquarium; High levels of the peptide suppressed this behavior. No effect is observed when injected into mice. The chain is Conotoxin p5a from Conus purpurascens (Purple cone).